We begin with the raw amino-acid sequence, 474 residues long: Dihydrolipoyl dehydrogenase (474 aa).

Residues 34–51 (EGNP…GGTC), Lys-60, and Gly-124 contribute to the FAD site. Cysteines 51 and 56 form a disulfide. NAD(+) is bound by residues 189 to 193 (GAGVI), Glu-212, Val-246, and 278 to 281 (SVGR). The FAD site is built by Asp-321 and Ala-329. His-453 (proton acceptor) is an active-site residue.

The protein belongs to the class-I pyridine nucleotide-disulfide oxidoreductase family. FAD is required as a cofactor.

Its subcellular location is the cytoplasm. The enzyme catalyses N(6)-[(R)-dihydrolipoyl]-L-lysyl-[protein] + NAD(+) = N(6)-[(R)-lipoyl]-L-lysyl-[protein] + NADH + H(+). The branched-chain alpha-keto dehydrogenase complex catalyzes the overall conversion of alpha-keto acids to acyl-CoA and CO(2). It contains multiple copies of 3 enzymatic components: branched-chain alpha-keto acid decarboxylase (E1), lipoamide acyltransferase (E2) and lipoamide dehydrogenase (E3). In Cupriavidus necator (strain ATCC 17699 / DSM 428 / KCTC 22496 / NCIMB 10442 / H16 / Stanier 337) (Ralstonia eutropha), this protein is Dihydrolipoyl dehydrogenase (odhL).